A 413-amino-acid polypeptide reads, in one-letter code: ORC1-type DNA replication protein 2 (413 aa).

ATP-binding positions include 70-74, tyrosine 217, and arginine 229; that span reads TGKTA.

The protein belongs to the CDC6/cdc18 family. As to quaternary structure, monomer. Interacts with Cdc6-3, MCM and PolB1. Post-translationally, autophosphorylated in vitro.

Involved in regulation of DNA replication. May play essential roles in origin recognition and cell cycle control of replication. Binds both single-stranded and double-stranded DNA, with a preference for molecules that contain a bubble, a fork, or a tail. Has a weak ATPase activity. Stimulates the binding of the MCM helicase to the origin DNA, but strongly inhibits ATPase and DNA helicase activities of MCM. Also regulates the DNA polymerase and the nuclease activities of PolB1. The chain is ORC1-type DNA replication protein 2 (cdc6-2) from Saccharolobus solfataricus (strain ATCC 35092 / DSM 1617 / JCM 11322 / P2) (Sulfolobus solfataricus).